We begin with the raw amino-acid sequence, 154 residues long: Cold shock domain-containing protein C2 (154 aa).

Ser19 is modified (phosphoserine). Residues 38–62 are disordered; it reads GGGIAPRDLPSPLPTKRTRTYSATA. Positions 69 to 136 constitute a CSD domain; the sequence is VFKGVCKQFS…KFQAVEVVLT (68 aa).

Its subcellular location is the nucleus. The protein localises to the cytoplasm. In terms of biological role, RNA-binding factor which binds specifically to the very 3'-UTR ends of both histone H1 and H3.3 mRNAs, encompassing the polyadenylation signal. Might play a central role in the negative regulation of histone variant synthesis in the developing brain. In Mus musculus (Mouse), this protein is Cold shock domain-containing protein C2 (Csdc2).